We begin with the raw amino-acid sequence, 443 residues long: ATP-dependent protease ATPase subunit HslU (443 aa).

ATP is bound by residues I18, 60 to 65 (GVGKTE), D256, E321, and R393.

This sequence belongs to the ClpX chaperone family. HslU subfamily. A double ring-shaped homohexamer of HslV is capped on each side by a ring-shaped HslU homohexamer. The assembly of the HslU/HslV complex is dependent on binding of ATP.

It is found in the cytoplasm. In terms of biological role, ATPase subunit of a proteasome-like degradation complex; this subunit has chaperone activity. The binding of ATP and its subsequent hydrolysis by HslU are essential for unfolding of protein substrates subsequently hydrolyzed by HslV. HslU recognizes the N-terminal part of its protein substrates and unfolds these before they are guided to HslV for hydrolysis. In Tolumonas auensis (strain DSM 9187 / NBRC 110442 / TA 4), this protein is ATP-dependent protease ATPase subunit HslU.